Reading from the N-terminus, the 207-residue chain is Peptidyl-tRNA hydrolase (207 aa).

Y30 contributes to the tRNA binding site. Residue H35 is the Proton acceptor of the active site. TRNA contacts are provided by Y81, N83, and N129.

It belongs to the PTH family. As to quaternary structure, monomer.

It is found in the cytoplasm. The catalysed reaction is an N-acyl-L-alpha-aminoacyl-tRNA + H2O = an N-acyl-L-amino acid + a tRNA + H(+). Functionally, hydrolyzes ribosome-free peptidyl-tRNAs (with 1 or more amino acids incorporated), which drop off the ribosome during protein synthesis, or as a result of ribosome stalling. In terms of biological role, catalyzes the release of premature peptidyl moieties from peptidyl-tRNA molecules trapped in stalled 50S ribosomal subunits, and thus maintains levels of free tRNAs and 50S ribosomes. This is Peptidyl-tRNA hydrolase from Bordetella avium (strain 197N).